Here is a 473-residue protein sequence, read N- to C-terminus: Arginine biosynthesis bifunctional protein ArgJ, mitochondrial (473 aa).

The substrate site is built by Thr-201, Lys-230, Thr-241, Glu-328, Asn-468, and Thr-473. Catalysis depends on Thr-241, which acts as the Nucleophile.

This sequence belongs to the ArgJ family. As to quaternary structure, heterodimer of an alpha and a beta chain. The alpha and beta chains are autoproteolytically processed from a single precursor protein within the mitochondrion.

Its subcellular location is the mitochondrion matrix. It carries out the reaction N(2)-acetyl-L-ornithine + L-glutamate = N-acetyl-L-glutamate + L-ornithine. The enzyme catalyses L-glutamate + acetyl-CoA = N-acetyl-L-glutamate + CoA + H(+). It functions in the pathway amino-acid biosynthesis; L-arginine biosynthesis; L-ornithine and N-acetyl-L-glutamate from L-glutamate and N(2)-acetyl-L-ornithine (cyclic): step 1/1. The protein operates within amino-acid biosynthesis; L-arginine biosynthesis; N(2)-acetyl-L-ornithine from L-glutamate: step 1/4. Catalyzes two activities which are involved in the cyclic version of arginine biosynthesis: the synthesis of acetylglutamate from glutamate and acetyl-CoA, and of ornithine by transacetylation between acetylornithine and glutamate. The sequence is that of Arginine biosynthesis bifunctional protein ArgJ, mitochondrial from Paracoccidioides lutzii (strain ATCC MYA-826 / Pb01) (Paracoccidioides brasiliensis).